Here is a 220-residue protein sequence, read N- to C-terminus: Ribosomal RNA large subunit methyltransferase E (220 aa).

S-adenosyl-L-methionine contacts are provided by glycine 60, tryptophan 62, aspartate 92, aspartate 108, and aspartate 133. Lysine 173 (proton acceptor) is an active-site residue. Residues alanine 195–arginine 220 are disordered.

This sequence belongs to the class I-like SAM-binding methyltransferase superfamily. RNA methyltransferase RlmE family.

It is found in the cytoplasm. It carries out the reaction uridine(2552) in 23S rRNA + S-adenosyl-L-methionine = 2'-O-methyluridine(2552) in 23S rRNA + S-adenosyl-L-homocysteine + H(+). Functionally, specifically methylates the uridine in position 2552 of 23S rRNA at the 2'-O position of the ribose in the fully assembled 50S ribosomal subunit. In Burkholderia pseudomallei (strain 1710b), this protein is Ribosomal RNA large subunit methyltransferase E.